Reading from the N-terminus, the 726-residue chain is Elongation factor 2 (726 aa).

In terms of domain architecture, tr-type G spans 19–260 (DRIRNIGICA…MVIKHLPSPP (242 aa)). GTP contacts are provided by residues 28-35 (AHIDHGKT), 94-98 (DTPGH), and 148-151 (NKVD). Residue His-602 is modified to Diphthamide.

It belongs to the TRAFAC class translation factor GTPase superfamily. Classic translation factor GTPase family. EF-G/EF-2 subfamily.

It localises to the cytoplasm. In terms of biological role, catalyzes the GTP-dependent ribosomal translocation step during translation elongation. During this step, the ribosome changes from the pre-translocational (PRE) to the post-translocational (POST) state as the newly formed A-site-bound peptidyl-tRNA and P-site-bound deacylated tRNA move to the P and E sites, respectively. Catalyzes the coordinated movement of the two tRNA molecules, the mRNA and conformational changes in the ribosome. The polypeptide is Elongation factor 2 (fusA) (Methanocaldococcus jannaschii (strain ATCC 43067 / DSM 2661 / JAL-1 / JCM 10045 / NBRC 100440) (Methanococcus jannaschii)).